A 364-amino-acid chain; its full sequence is DNA replication and repair protein RecF (364 aa).

30-37 serves as a coordination point for ATP; that stretch reads GRNAQGKT.

The protein belongs to the RecF family.

The protein localises to the cytoplasm. Its function is as follows. The RecF protein is involved in DNA metabolism; it is required for DNA replication and normal SOS inducibility. RecF binds preferentially to single-stranded, linear DNA. It also seems to bind ATP. The chain is DNA replication and repair protein RecF from Pelotomaculum thermopropionicum (strain DSM 13744 / JCM 10971 / SI).